The sequence spans 34 residues: Photosystem II reaction center protein Psb30 (34 aa).

The helical transmembrane segment at 6 to 26 (VIGQLIATGAIMLAGPAVIVL) threads the bilayer.

Belongs to the Psb30/Ycf12 family. As to quaternary structure, PSII is composed of 1 copy each of membrane proteins PsbA, PsbB, PsbC, PsbD, PsbE, PsbF, PsbH, PsbI, PsbJ, PsbK, PsbL, PsbM, PsbT, PsbX, PsbY, PsbZ, Psb30/Ycf12, peripheral proteins of the oxygen-evolving complex and a large number of cofactors. It forms dimeric complexes.

Its subcellular location is the plastid. The protein resides in the chloroplast thylakoid membrane. In terms of biological role, a core subunit of photosystem II (PSII), probably helps stabilize the reaction center. This is Photosystem II reaction center protein Psb30 from Trieres chinensis (Marine centric diatom).